Reading from the N-terminus, the 179-residue chain is Probable DNA-directed RNA polymerase subunit delta (179 aa).

The 68-residue stretch at 14–81 (MSLVELAYEI…GDQRWGLRSW (68 aa)) folds into the HTH HARE-type domain. A disordered region spans residues 108-179 (VVEEDFDEIE…DDLDDNEEEK (72 aa)). A compositionally biased stretch (acidic residues) spans 109–179 (VEEDFDEIEE…DDLDDNEEEK (71 aa)).

The protein belongs to the RpoE family. RNAP is composed of a core of 2 alpha, a beta and a beta' subunits. The core is associated with a delta subunit and one of several sigma factors.

Functionally, participates in both the initiation and recycling phases of transcription. In the presence of the delta subunit, RNAP displays an increased specificity of transcription, a decreased affinity for nucleic acids, and an increased efficiency of RNA synthesis because of enhanced recycling. The chain is Probable DNA-directed RNA polymerase subunit delta from Bacillus pumilus (strain SAFR-032).